The primary structure comprises 394 residues: Protein-glutamate methylesterase/protein-glutamine glutaminase 2 (394 aa).

The 118-residue stretch at 4-121 folds into the Response regulatory domain; sequence KVLVVDDSSF…ARNRDEAISL (118 aa). At Asp-55 the chain carries 4-aspartylphosphate. The CheB-type methylesterase domain occupies 202–394; the sequence is SGKKYQLMAI…AERILVEVGR (193 aa). Catalysis depends on residues Ser-214, His-241, and Asp-337.

The protein belongs to the CheB family. Phosphorylated by CheA. Phosphorylation of the N-terminal regulatory domain activates the methylesterase activity.

It is found in the cytoplasm. It catalyses the reaction [protein]-L-glutamate 5-O-methyl ester + H2O = L-glutamyl-[protein] + methanol + H(+). The catalysed reaction is L-glutaminyl-[protein] + H2O = L-glutamyl-[protein] + NH4(+). In terms of biological role, involved in chemotaxis. Part of a chemotaxis signal transduction system that modulates chemotaxis in response to various stimuli. Catalyzes the demethylation of specific methylglutamate residues introduced into the chemoreceptors (methyl-accepting chemotaxis proteins or MCP) by CheR. Also mediates the irreversible deamidation of specific glutamine residues to glutamic acid. This Photobacterium profundum (strain SS9) protein is Protein-glutamate methylesterase/protein-glutamine glutaminase 2.